The chain runs to 445 residues: UNC93-like protein MFSD11 (445 aa).

The chain crosses the membrane as a helical span at residues 8–28 (LLNIIILGIGFMFMFTAFQTS). The N-linked (GlcNAc...) asparagine glycan is linked to N40. 4 consecutive transmembrane segments (helical) span residues 53–73 (AIIY…VAVI), 74–94 (GCQM…AMFI), 98–118 (TWSF…LWTA), and 138–158 (IFWA…YLAW). A glycan (N-linked (GlcNAc...) asparagine) is linked at N163. 7 helical membrane passes run 170 to 190 (RTVF…FFLI), 239 to 259 (MLLL…YSGV), 277 to 297 (LIGL…GLFG), 309 to 329 (PVVI…YLYM), 345 to 365 (AFIN…GLGD), 385 to 405 (APAF…AFFY), and 415 to 435 (LLIL…VEWG).

This sequence belongs to the unc-93 family.

It localises to the membrane. The polypeptide is UNC93-like protein MFSD11 (mfsd11) (Xenopus tropicalis (Western clawed frog)).